We begin with the raw amino-acid sequence, 436 residues long: Nicotinate phosphoribosyltransferase (436 aa).

The residue at position 231 (H231) is a Phosphohistidine; by autocatalysis.

It belongs to the NAPRTase family. In terms of processing, transiently phosphorylated on a His residue during the reaction cycle. Phosphorylation strongly increases the affinity for substrates and increases the rate of nicotinate D-ribonucleotide production. Dephosphorylation regenerates the low-affinity form of the enzyme, leading to product release.

It carries out the reaction nicotinate + 5-phospho-alpha-D-ribose 1-diphosphate + ATP + H2O = nicotinate beta-D-ribonucleotide + ADP + phosphate + diphosphate. The protein operates within cofactor biosynthesis; NAD(+) biosynthesis; nicotinate D-ribonucleotide from nicotinate: step 1/1. Its function is as follows. Catalyzes the synthesis of beta-nicotinate D-ribonucleotide from nicotinate and 5-phospho-D-ribose 1-phosphate at the expense of ATP. The protein is Nicotinate phosphoribosyltransferase of Vibrio campbellii (strain ATCC BAA-1116).